A 491-amino-acid chain; its full sequence is Carbohydrate ABC transporter substrate-binding protein (491 aa).

Residues Asp-212, His-247, His-252, and Glu-256 each coordinate Zn(2+).

It belongs to the bacterial solute-binding protein 1 family. As to quaternary structure, exists as a monomer, homodimer, homotrimer and homotetramer; oligomerization increases with higher protein concentration.

The protein resides in the cell surface. Probably part of an ABC transporter complex involved in carbohydrate transport. The sequence is that of Carbohydrate ABC transporter substrate-binding protein from Streptococcus pneumoniae serotype 4 (strain ATCC BAA-334 / TIGR4).